Consider the following 552-residue polypeptide: Gamma-aminobutyric acid receptor subunit alpha-4 (552 aa).

The signal sequence occupies residues 1–35 (MVSVQKVPAIVLCSGVSLALLHVLCLATCLNESPG). Residues 36 to 259 (QNSKDEKLCP…FHLRRKMGYF (224 aa)) lie on the Extracellular side of the membrane. An N-linked (GlcNAc...) asparagine glycan is attached at N47. 4-aminobutanoate is bound at residue R100. Residues N144 and N157 are each glycosylated (N-linked (GlcNAc...) asparagine). T163 serves as a coordination point for 4-aminobutanoate. A disulfide bond links C172 and C186. A helical transmembrane segment spans residues 260–280 (MIQTYIPCIMTVILSQVSFWI). The Cytoplasmic segment spans residues 281–284 (NKES). The chain crosses the membrane as a helical span at residues 285 to 305 (VPARTVFGITTVLTMTTLSIS). Residues 306–318 (ARHSLPKVSYATA) are Extracellular-facing. Residues 319 to 341 (MDWFIAVCFAFVFSALIEFAAVN) traverse the membrane as a helical segment. Over 342 to 515 (YFTNIQMQKA…PPPSGSGTSK (174 aa)) the chain is Cytoplasmic. 3 disordered regions span residues 353 to 436 (KKIS…NPFS), 448 to 470 (ARGLSSAASPSPHGTLQPAPLRS), and 486 to 513 (TTVNTTGVPGNVSATPPPSAPPPSGSGT). The segment covering 403–423 (RTEVGNHSSKTTAAQESSETT) has biased composition (polar residues). Composition is skewed to low complexity over residues 448-458 (ARGLSSAASPS) and 486-499 (TTVNTTGVPGNVSA). Residues 500–509 (TPPPSAPPPS) show a composition bias toward pro residues. A helical transmembrane segment spans residues 516–538 (IDKYARILFPVTFGAFNMVYWVV). The Extracellular portion of the chain corresponds to 539–552 (YLSKDTMEKSESLM).

This sequence belongs to the ligand-gated ion channel (TC 1.A.9) family. Gamma-aminobutyric acid receptor (TC 1.A.9.5) subfamily. GABRA4 sub-subfamily. In terms of assembly, heteropentamer, formed by a combination of alpha (GABRA1-6), beta (GABRB1-3), gamma (GABRG1-3), delta (GABRD), epsilon (GABRE), rho (GABRR1-3), pi (GABRP) and theta (GABRQ) chains, each subunit exhibiting distinct physiological and pharmacological properties. In terms of tissue distribution, expressed in the brain.

Its subcellular location is the cell membrane. The protein resides in the postsynaptic cell membrane. Its activity is regulated as follows. Potentiated by histamine. Alpha subunit of the heteropentameric ligand-gated chloride channel gated by gamma-aminobutyric acid (GABA), a major inhibitory neurotransmitter in the brain. GABA-gated chloride channels, also named GABA(A) receptors (GABAAR), consist of five subunits arranged around a central pore and contain GABA active binding site(s) located at the alpha and beta subunit interface(s). Alpha-4/GABRA4 subunit often assembles with delta or gamma-2 subunits, in combination with beta subunits. When activated by GABA, GABAARs selectively allow the flow of chloride anions across the cell membrane down their electrochemical gradient. GABAARs containing alpha-4 are predominantly extrasynaptic, contributing to tonic inhibition in dentate granule cells and thalamic relay neurons. Extrasynaptic alpha-4-containing GABAARs control levels of excitability and network activity. GABAAR containing alpha-4-beta-3-delta subunits can simultaneously bind GABA and histamine where histamine binds at the interface of two neighboring beta subunits, which may be involved in the regulation of sleep and wakefulness. The sequence is that of Gamma-aminobutyric acid receptor subunit alpha-4 from Rattus norvegicus (Rat).